Consider the following 371-residue polypeptide: GDP-mannose 3,5-epimerase 2 (371 aa).

Residues 29 to 55, Asp53, and Asp73 contribute to the NAD(+) site; that span reads GAGG…SDWK. Substrate is bound by residues Gly98 and 138 to 140; that span reads SAC. Tyr168 and Lys172 together coordinate NAD(+). The active-site Proton acceptor is Tyr168. Substrate-binding positions include Asn197, 210-212, Lys219, 235-237, Arg300, and Ser350; these read EKA and QTR.

It belongs to the NAD(P)-dependent epimerase/dehydratase family. It depends on NAD(+) as a cofactor.

The catalysed reaction is GDP-alpha-D-mannose = GDP-beta-L-gulose. It carries out the reaction GDP-beta-L-gulose = GDP-beta-L-galactose. The protein operates within cofactor biosynthesis; L-ascorbate biosynthesis via GDP-alpha-D-mannose pathway; L-ascorbate from GDP-alpha-D-mannose: step 1/5. Catalyzes a reversible epimerization of GDP-D-mannose that precedes the committed step in the biosynthesis of vitamin C (L-ascorbate), resulting in the hydrolysis of the highly energetic glycosyl-pyrophosphoryl linkage. Able to catalyze 2 distinct epimerization reactions and can release both GDP-L-galactose and GDP-L-gulose from GDP-mannose. In Oryza sativa subsp. japonica (Rice), this protein is GDP-mannose 3,5-epimerase 2 (GME-2).